A 347-amino-acid polypeptide reads, in one-letter code: WAT1-related protein At4g15540 (347 aa).

10 helical membrane passes run 15 to 35, 47 to 67, 73 to 93, 108 to 128, 139 to 159, 178 to 198, 210 to 230, 243 to 263, 276 to 296, and 299 to 319; these read VVPFTAMIAIECTTVGSSILY, VFVFYAYVGATLVLLLLSLIF, LPTAKSSLFFKIFLLALLGLT, TLSSAISNLTPAFTFILAIFF, ATQAKIIGTIVSISGALVIVL, WIIGGLLLGLQFLLLSVWFIL, IAVVFCYNLCATLISGTVCLL, GFSLASVIYSGLFDTSLGSVI, ISLFKPLSIAIAVAMAAIFLG, and LHLGSVIGSVILSFGFYTVIW. The region spanning 30–158 is the EamA 1 domain; the sequence is GSSILYKAAT…VSISGALVIV (129 aa). An EamA 2 domain is found at 216–317; it reads YNLCATLISG…VILSFGFYTV (102 aa).

The protein belongs to the drug/metabolite transporter (DMT) superfamily. Plant drug/metabolite exporter (P-DME) (TC 2.A.7.4) family.

The protein resides in the membrane. In Arabidopsis thaliana (Mouse-ear cress), this protein is WAT1-related protein At4g15540.